A 263-amino-acid chain; its full sequence is UPF0739 protein C1orf74 homolog (263 aa).

This sequence belongs to the UPF0739 family.

This Mus musculus (Mouse) protein is UPF0739 protein C1orf74 homolog.